A 626-amino-acid chain; its full sequence is Ankyrin repeat domain-containing protein 13B (626 aa).

Methionine 1 is subject to N-acetylmethionine. ANK repeat units lie at residues 47 to 76 (RGRT…DVGR) and 80 to 109 (SGWT…YQRV). Residues 442–474 (PVPSVRGSPSSETPSPGSDSSSVSSSSSTTSCR) form a disordered region. Over residues 449–472 (SPSSETPSPGSDSSSVSSSSSTTS) the composition is skewed to low complexity. Positions 503-522 (DDDDLLQFAIQQSLLEAGSE) constitute a UIM 1 domain. Disordered stretches follow at residues 534–590 (NSKP…DEQL) and 595–614 (ELSA…EEEE). Over residues 554–573 (PPTPQRQPAPPASVPSPRPS) the composition is skewed to pro residues. UIM domains are found at residues 585–604 (SYDE…QEER) and 610–626 (QEEE…LTEQ).

In terms of assembly, interacts with EGFR (ubiquitinated); the interaction is direct and may regulate EGFR internalization.

The protein localises to the cell membrane. It localises to the late endosome. It is found in the early endosome. Its function is as follows. Ubiquitin-binding protein that specifically recognizes and binds 'Lys-63'-linked ubiquitin. Does not bind 'Lys-48'-linked ubiquitin. Positively regulates the internalization of ligand-activated EGFR by binding to the Ub moiety of ubiquitinated EGFR at the cell membrane. This Homo sapiens (Human) protein is Ankyrin repeat domain-containing protein 13B (ANKRD13B).